The sequence spans 91 residues: Large ribosomal subunit protein bL27 (91 aa).

Belongs to the bacterial ribosomal protein bL27 family.

This Pseudomonas savastanoi pv. phaseolicola (strain 1448A / Race 6) (Pseudomonas syringae pv. phaseolicola (strain 1448A / Race 6)) protein is Large ribosomal subunit protein bL27.